We begin with the raw amino-acid sequence, 279 residues long: Energy-coupling factor transporter ATP-binding protein EcfA1 (279 aa).

Positions 5-240 (IELKKVTFNY…GDELLQLGLD (236 aa)) constitute an ABC transporter domain. Position 40-47 (40-47 (GHNGSGKS)) interacts with ATP.

Belongs to the ABC transporter superfamily. Energy-coupling factor EcfA family. Forms a stable energy-coupling factor (ECF) transporter complex composed of 2 membrane-embedded substrate-binding proteins (S component), 2 ATP-binding proteins (A component) and 2 transmembrane proteins (T component).

The protein localises to the cell membrane. Its function is as follows. ATP-binding (A) component of a common energy-coupling factor (ECF) ABC-transporter complex. Unlike classic ABC transporters this ECF transporter provides the energy necessary to transport a number of different substrates. The protein is Energy-coupling factor transporter ATP-binding protein EcfA1 of Streptococcus pyogenes serotype M28 (strain MGAS6180).